A 156-amino-acid chain; its full sequence is ATP synthase subunit b 2 (156 aa).

A helical transmembrane segment spans residues 6 to 26 (SMFGQAISFVIFVWLCMKYVW).

The protein belongs to the ATPase B chain family. In terms of assembly, F-type ATPases have 2 components, F(1) - the catalytic core - and F(0) - the membrane proton channel. F(1) has five subunits: alpha(3), beta(3), gamma(1), delta(1), epsilon(1). F(0) has three main subunits: a(1), b(2) and c(10-14). The alpha and beta chains form an alternating ring which encloses part of the gamma chain. F(1) is attached to F(0) by a central stalk formed by the gamma and epsilon chains, while a peripheral stalk is formed by the delta and b chains.

It is found in the cell inner membrane. Its function is as follows. F(1)F(0) ATP synthase produces ATP from ADP in the presence of a proton or sodium gradient. F-type ATPases consist of two structural domains, F(1) containing the extramembraneous catalytic core and F(0) containing the membrane proton channel, linked together by a central stalk and a peripheral stalk. During catalysis, ATP synthesis in the catalytic domain of F(1) is coupled via a rotary mechanism of the central stalk subunits to proton translocation. Component of the F(0) channel, it forms part of the peripheral stalk, linking F(1) to F(0). The chain is ATP synthase subunit b 2 from Vibrio campbellii (strain ATCC BAA-1116).